The chain runs to 261 residues: Tryptophan synthase alpha chain (261 aa).

Active-site proton acceptor residues include Glu47 and Asp58.

This sequence belongs to the TrpA family. Tetramer of two alpha and two beta chains.

The catalysed reaction is (1S,2R)-1-C-(indol-3-yl)glycerol 3-phosphate + L-serine = D-glyceraldehyde 3-phosphate + L-tryptophan + H2O. The protein operates within amino-acid biosynthesis; L-tryptophan biosynthesis; L-tryptophan from chorismate: step 5/5. Functionally, the alpha subunit is responsible for the aldol cleavage of indoleglycerol phosphate to indole and glyceraldehyde 3-phosphate. The chain is Tryptophan synthase alpha chain from Neisseria gonorrhoeae (strain ATCC 700825 / FA 1090).